We begin with the raw amino-acid sequence, 514 residues long: Histidine ammonia-lyase (514 aa).

Residues Ala146–Gly148 constitute a cross-link (5-imidazolinone (Ala-Gly)). 2,3-didehydroalanine (Ser) is present on Ser147.

The protein belongs to the PAL/histidase family. Post-translationally, contains an active site 4-methylidene-imidazol-5-one (MIO), which is formed autocatalytically by cyclization and dehydration of residues Ala-Ser-Gly.

Its subcellular location is the cytoplasm. It carries out the reaction L-histidine = trans-urocanate + NH4(+). Its pathway is amino-acid degradation; L-histidine degradation into L-glutamate; N-formimidoyl-L-glutamate from L-histidine: step 1/3. This chain is Histidine ammonia-lyase, found in Clostridium tetani (strain Massachusetts / E88).